A 209-amino-acid polypeptide reads, in one-letter code: Uracil phosphoribosyltransferase (209 aa).

Residues Arg-79, Arg-104, and 131-139 contribute to the 5-phospho-alpha-D-ribose 1-diphosphate site; that span reads DPMLATGGS. Uracil-binding positions include Ile-194 and 199 to 201; that span reads GDA. Asp-200 serves as a coordination point for 5-phospho-alpha-D-ribose 1-diphosphate.

It belongs to the UPRTase family. The cofactor is Mg(2+).

The catalysed reaction is UMP + diphosphate = 5-phospho-alpha-D-ribose 1-diphosphate + uracil. It participates in pyrimidine metabolism; UMP biosynthesis via salvage pathway; UMP from uracil: step 1/1. Its activity is regulated as follows. Allosterically activated by GTP. In terms of biological role, catalyzes the conversion of uracil and 5-phospho-alpha-D-ribose 1-diphosphate (PRPP) to UMP and diphosphate. In Geobacillus kaustophilus (strain HTA426), this protein is Uracil phosphoribosyltransferase.